A 279-amino-acid polypeptide reads, in one-letter code: Beta-porphyranase E (279 aa).

A signal peptide spans 1-18 (MGNTMLLTLLLVVVAAYG). In terms of domain architecture, GH16 spans 19 to 277 (QTPPPPEGFR…WVRSYTLLPV (259 aa)). Positions 56, 60, 141, 146, and 243 each coordinate substrate. Glu-141 functions as the Nucleophile in the catalytic mechanism. The active-site Proton donor is the Glu-146.

This sequence belongs to the glycosyl hydrolase 16 family.

It is found in the periplasm. The catalysed reaction is Hydrolysis of beta-D-galactopyranose-(1-&gt;4)-alpha-L-galactopyranose-6-sulfate linkages in porphyran.. Functionally, cleaves the sulfated polysaccharide porphyran at the (1-&gt;4) linkages between beta-D-galactopyranose and alpha-L-galactopyranose-6-sulfate, forming mostly the disaccharide alpha-L-galactopyranose-6-sulfate-(1-&gt;3)-beta-D-galactose. The sequence is that of Beta-porphyranase E (porE) from Zobellia galactanivorans (strain DSM 12802 / CCUG 47099 / CIP 106680 / NCIMB 13871 / Dsij).